A 487-amino-acid chain; its full sequence is Probable aspartic-type endopeptidase opsB (487 aa).

The N-terminal stretch at 1-20 (MQKSWLVLLVACLGLQGTTA) is a signal peptide. The 330-residue stretch at 69–398 (YFCNITLGTP…DLSNNEISLA (330 aa)) folds into the Peptidase A1 domain. A glycan (N-linked (GlcNAc...) asparagine) is linked at asparagine 72. The active site involves aspartate 87. Residues asparagine 99, asparagine 111, asparagine 132, and asparagine 272 are each glycosylated (N-linked (GlcNAc...) asparagine). Residue aspartate 286 is part of the active site. 2 N-linked (GlcNAc...) asparagine glycosylation sites follow: asparagine 329 and asparagine 403. Alanine 463 carries the GPI-anchor amidated alanine lipid modification. The propeptide at 464–487 (PAGPTDVPKHLVLGAAAIGYVLAF) is removed in mature form.

Belongs to the peptidase A1 family.

The protein localises to the cell membrane. Its function is as follows. Probable GPI-anchored aspartic-type endopeptidase. This is Probable aspartic-type endopeptidase opsB (opsB) from Aspergillus oryzae (strain ATCC 42149 / RIB 40) (Yellow koji mold).